The primary structure comprises 200 residues: Adenylate kinase (200 aa).

An ATP-binding site is contributed by 10–15; sequence GAGKGT. The tract at residues 30 to 59 is NMP; sequence STGDLFRANISQQTELGKLAKSYMDAGNLV. AMP-binding positions include T31, R36, 57 to 59, 84 to 87, and Q91; these read NLV and GFPR. Residues 125 to 163 form an LID region; sequence GRRVCRNDSAHVFHVTYTPPKKEGVCDVCGGELYQRDDD. ATP is bound by residues R126 and 136 to 137; that span reads VF. Positions 160 and 171 each coordinate AMP.

The protein belongs to the adenylate kinase family. As to quaternary structure, monomer.

The protein localises to the cytoplasm. The enzyme catalyses AMP + ATP = 2 ADP. The protein operates within purine metabolism; AMP biosynthesis via salvage pathway; AMP from ADP: step 1/1. Its function is as follows. Catalyzes the reversible transfer of the terminal phosphate group between ATP and AMP. Plays an important role in cellular energy homeostasis and in adenine nucleotide metabolism. This is Adenylate kinase from Streptomyces lividans.